Here is a 164-residue protein sequence, read N- to C-terminus: MADS-box transcription factor 51 (164 aa).

One can recognise an MADS-box domain in the interval 2–62; that stretch reads ARRGRVQLRR…GKLYEYSSSS (61 aa). Positions 133 to 164 are disordered; the sequence is TKSKKMLAKQNGEGSRSRANSSGSRGQEEGSA.

In terms of tissue distribution, widely expressed.

The protein localises to the nucleus. Functionally, probable transcription factor involved in the regulation of flowering time under short day (SD) conditions. Functions as a promoter of flowering under SD conditions, upstream of EHD1, HD3A and MADS14, but downstream of GIGANTEA (GI). May transmit a SD promotion signal from GI to EHD1. Functions independently of MADS50 to control flowering time. This chain is MADS-box transcription factor 51, found in Oryza sativa subsp. japonica (Rice).